The chain runs to 89 residues: HssA/B-like protein 14 (89 aa).

It belongs to the hssA/B family.

This Dictyostelium discoideum (Social amoeba) protein is HssA/B-like protein 14 (hssl14).